A 246-amino-acid chain; its full sequence is Ribosomal RNA small subunit methyltransferase G (246 aa).

S-adenosyl-L-methionine is bound by residues Gly81, Phe86, 137–138 (AE), and Arg156. A disordered region spans residues 221-246 (LVLIRKERPTPKAYPRRAGVPAKSPL).

This sequence belongs to the methyltransferase superfamily. RNA methyltransferase RsmG family.

The protein resides in the cytoplasm. Specifically methylates the N7 position of a guanine in 16S rRNA. This is Ribosomal RNA small subunit methyltransferase G from Symbiobacterium thermophilum (strain DSM 24528 / JCM 14929 / IAM 14863 / T).